The sequence spans 129 residues: Glycine cleavage system H protein (129 aa).

Residues 24–106 enclose the Lipoyl-binding domain; that stretch reads TYTVGITEHA…YTGGWIFKIK (83 aa). Lys65 carries the N6-lipoyllysine modification.

Belongs to the GcvH family. As to quaternary structure, the glycine cleavage system is composed of four proteins: P, T, L and H. (R)-lipoate serves as cofactor.

In terms of biological role, the glycine cleavage system catalyzes the degradation of glycine. The H protein shuttles the methylamine group of glycine from the P protein to the T protein. The sequence is that of Glycine cleavage system H protein from Salmonella choleraesuis (strain SC-B67).